Consider the following 328-residue polypeptide: 4-hydroxythreonine-4-phosphate dehydrogenase (328 aa).

2 residues coordinate substrate: histidine 134 and threonine 135. The a divalent metal cation site is built by histidine 164, histidine 209, and histidine 265. Lysine 273, asparagine 282, and arginine 291 together coordinate substrate.

This sequence belongs to the PdxA family. In terms of assembly, homodimer. Zn(2+) serves as cofactor. It depends on Mg(2+) as a cofactor. Requires Co(2+) as cofactor.

It localises to the cytoplasm. The enzyme catalyses 4-(phosphooxy)-L-threonine + NAD(+) = 3-amino-2-oxopropyl phosphate + CO2 + NADH. It functions in the pathway cofactor biosynthesis; pyridoxine 5'-phosphate biosynthesis; pyridoxine 5'-phosphate from D-erythrose 4-phosphate: step 4/5. Catalyzes the NAD(P)-dependent oxidation of 4-(phosphooxy)-L-threonine (HTP) into 2-amino-3-oxo-4-(phosphooxy)butyric acid which spontaneously decarboxylates to form 3-amino-2-oxopropyl phosphate (AHAP). This is 4-hydroxythreonine-4-phosphate dehydrogenase from Vibrio vulnificus (strain YJ016).